The chain runs to 439 residues: SH3 domain-containing protein 1 (439 aa).

One can recognise a BAR domain in the interval 32–263 (DAVVVDEEEL…MIAEEEAIGS (232 aa)). Residues 277 to 291 (SLPQQEPNSNSSGEI) show a composition bias toward polar residues. Positions 277–362 (SLPQQEPNSN…SDDHHNHQLL (86 aa)) are disordered. Basic and acidic residues predominate over residues 318–358 (SPKDEMKSSPQEETKSNHQKEIKSSPQEEIKKSNGSDDHHN). The SH3 domain maps to 366 to 425 (DSYFLAKVVHPFDAQAPGELSLAVDDYVIVRQVAGTGWSEGEYKGKAGWFPSAYVEKQEK).

As to quaternary structure, interacts with the auxilin-like protein AUXI1. Highly expressed in flowers. Detected in seedlings, roots, leaves and stems.

It localises to the cytoplasmic vesicle. Its subcellular location is the clathrin-coated vesicle. It is found in the cell membrane. The protein resides in the golgi apparatus. The protein localises to the trans-Golgi network. It localises to the endoplasmic reticulum. Functionally, lipid binding protein bound strongly to phosphatidic acid, phosphatidylinositol-4-phosphate and phosphatidylinositol-4,5-bisphosphate. Binds actin in vitro. Involved in trafficking and modification of clathrin-coated vesicles. The protein is SH3 domain-containing protein 1 (SH3P1) of Arabidopsis thaliana (Mouse-ear cress).